The sequence spans 202 residues: Probable molybdenum cofactor guanylyltransferase (202 aa).

Residues 13–15 (LAG), Lys25, Asp71, and Asp103 contribute to the GTP site. Mg(2+) is bound at residue Asp103.

It belongs to the MobA family. Mg(2+) is required as a cofactor.

Its subcellular location is the cytoplasm. The enzyme catalyses Mo-molybdopterin + GTP + H(+) = Mo-molybdopterin guanine dinucleotide + diphosphate. In terms of biological role, transfers a GMP moiety from GTP to Mo-molybdopterin (Mo-MPT) cofactor (Moco or molybdenum cofactor) to form Mo-molybdopterin guanine dinucleotide (Mo-MGD) cofactor. This chain is Probable molybdenum cofactor guanylyltransferase, found in Opitutus terrae (strain DSM 11246 / JCM 15787 / PB90-1).